A 130-amino-acid chain; its full sequence is Small ribosomal subunit protein uS11c (130 aa).

It belongs to the universal ribosomal protein uS11 family. Part of the 30S ribosomal subunit.

The protein resides in the plastid. Its subcellular location is the chloroplast. In Pinus thunbergii (Japanese black pine), this protein is Small ribosomal subunit protein uS11c.